The sequence spans 833 residues: RNA-binding protein 5-A (833 aa).

The tract at residues M1–D87 is disordered. Positions K102–P182 constitute an RRM 1 domain. A RanBP2-type zinc finger spans residues K185 to E214. The RRM 2 domain maps to S241–S325. Over residues T396–Y428 the composition is skewed to polar residues. Disordered stretches follow at residues T396–A458 and A523–Q559. Residues Q429 to A458 are compositionally biased toward low complexity. The C2H2-type zinc-finger motif lies at L667–H692. The 47-residue stretch at N761–S807 folds into the G-patch domain.

This sequence belongs to the RBM5/RBM10 family. As to quaternary structure, component of the spliceosome A complex (also known as the prespliceosome). Appears to dissociate from the spliceosome upon formation of the spliceosome B complex (also known as the precatalytic spliceosome), in which the heterotrimeric U4/U6.U5 snRNPs are bound.

Its subcellular location is the nucleus. Its function is as follows. Component of the spliceosome A complex. Regulates alternative splicing of a number of mRNAs. May modulate splice site pairing after recruitment of the U1 and U2 snRNPs to the 5' and 3' splice sites of the intron. The protein is RNA-binding protein 5-A (rbm5-a) of Xenopus laevis (African clawed frog).